Here is a 116-residue protein sequence, read N- to C-terminus: MVGGEATSAVEKLVSGVRQAADFAEQFRSYSESEKQWKARMEFILRHLPDYRDPPDGGGRLDQLLSLSMVWANHLFLGCSYNKDLLDKVMEMADGIEVEDLPQFTSRSELMKKHQS.

N-acetylmethionine is present on methionine 1. The 93-residue stretch at alanine 24 to serine 116 folds into the XRN2-binding (XTBD) domain.

It belongs to the CARF family. In terms of assembly, interacts with XRN2; the interaction is direct.

The polypeptide is CDKN2AIP N-terminal-like protein (Cdkn2aipnl) (Rattus norvegicus (Rat)).